The chain runs to 482 residues: Putative metabolite transport protein YfiG (482 aa).

At 1-29 (MSTKKKEAVIGKESLAHKGLLRTITLVST) the chain is on the cytoplasmic side. The chain crosses the membrane as a helical span at residues 30 to 50 (FGGLLFGYDTGVINGALPFMA). Residues 51-59 (TAGQLNLTP) lie on the Extracellular side of the membrane. A helical membrane pass occupies residues 60–80 (VTEGLVASSLLLGAAFGAMFG). The Cytoplasmic segment spans residues 81-92 (GRLSDRHGRRKT). The chain crosses the membrane as a helical span at residues 93 to 113 (ILYLALLFIAATLGCTFSPNA). The Extracellular segment spans residues 114–120 (SVMIAFR). Residues 121 to 141 (FLLGLAVGCASVTVPTFLAEI) form a helical membrane-spanning segment. At 142 to 155 (SPAERRGRIVTQNE) the chain is on the cytoplasmic side. Residues 156–176 (LMIVIGQLLAYTFNAIIGSTM) traverse the membrane as a helical segment. Topologically, residues 177–184 (GESANVWR) are extracellular. A helical transmembrane segment spans residues 185-205 (YMLVIATLPAVVLWFGMLIVP). The Cytoplasmic segment spans residues 206-263 (ESPRWLAAKGRMGDALRVLRQIREDSQAQQEIKEIKHAIEGTAKKAGFHDFQEPWIRR). A helical membrane pass occupies residues 264–284 (ILFIGIGIAIVQQITGVNSIM). Residues 285 to 301 (YYGTEILREAGFQTEAA) are Extracellular-facing. The chain crosses the membrane as a helical span at residues 302-322 (LIGNIANGVISVIAVIFGIWL). Residues 323–331 (LGKVRRRPM) lie on the Cytoplasmic side of the membrane. The next 2 helical transmembrane spans lie at 332–352 (LIIG…LSIV) and 353–373 (LEGT…FLAF). Residues 374–400 (QQTAISTVTWLMLSEIFPMHVRGLGMG) are Cytoplasmic-facing. Residues 401-421 (ISTFCLWTANFLIGFTFPILL) form a helical membrane-spanning segment. At 422-423 (NH) the chain is on the extracellular side. Residues 424-444 (IGMSATFFIFVAMNILAILFV) form a helical membrane-spanning segment. Residues 445–482 (KKYVPETKGRSLEQLEHSFRQYGRRADQEIQNQTTHLS) are Cytoplasmic-facing.

This sequence belongs to the major facilitator superfamily. Sugar transporter (TC 2.A.1.1) family.

The protein resides in the cell membrane. This chain is Putative metabolite transport protein YfiG (yfiG), found in Bacillus subtilis (strain 168).